A 1183-amino-acid polypeptide reads, in one-letter code: PAN2-PAN3 deadenylation complex catalytic subunit PAN2 (1183 aa).

WD repeat units lie at residues 150 to 189 (SIENSSPVVKLAPLHRTVLAAGLSGQVTVLDPRTGFKAAQ) and 289 to 328 (DVSSYITSMALSSRGDYLAFGDGDGQLHVWTTNETGENAA). Positions 331–478 (ENGSIVLPPF…EEIEEELNDG (148 aa)) are linker. Residues 439–470 (AEGRARGKGRRDSGPRFRSEKDKKGTYKDKEE) are disordered. Positions 448–469 (RRDSGPRFRSEKDKKGTYKDKE) are enriched in basic and acidic residues. The USP domain maps to 479-864 (EVPKYYRKVE…VPAVIILERE (386 aa)). The region spanning 916 to 1085 (VAIDAEFVAL…HDSIEDAHFA (170 aa)) is the Exonuclease domain. Residues D919, E921, D1028, and D1081 each coordinate a divalent metal cation. Residues 1155–1183 (KSRMATPPPPTKLGLPQWASQNSPSPLRR) are disordered. Residues 1172-1183 (WASQNSPSPLRR) are compositionally biased toward polar residues.

This sequence belongs to the peptidase C19 family. PAN2 subfamily. As to quaternary structure, forms a heterotrimer with an asymmetric homodimer of the regulatory subunit PAN3 to form the poly(A)-nuclease (PAN) deadenylation complex. Requires a divalent metal cation as cofactor.

Its subcellular location is the cytoplasm. The enzyme catalyses Exonucleolytic cleavage of poly(A) to 5'-AMP.. Its activity is regulated as follows. Positively regulated by the regulatory subunit PAN3. Its function is as follows. Catalytic subunit of the poly(A)-nuclease (PAN) deadenylation complex, one of two cytoplasmic mRNA deadenylases involved in mRNA turnover. PAN specifically shortens poly(A) tails of RNA and the activity is stimulated by poly(A)-binding protein PAB1. PAN deadenylation is followed by rapid degradation of the shortened mRNA tails by the CCR4-NOT complex. Deadenylated mRNAs are then degraded by two alternative mechanisms, namely exosome-mediated 3'-5' exonucleolytic degradation, or deadenylation-dependent mRNA decaping and subsequent 5'-3' exonucleolytic degradation by XRN1. May also be involved in post-transcriptional maturation of mRNA poly(A) tails. In Cryptococcus neoformans var. neoformans serotype D (strain B-3501A) (Filobasidiella neoformans), this protein is PAN2-PAN3 deadenylation complex catalytic subunit PAN2.